The chain runs to 202 residues: Large ribosomal subunit protein bL25 (202 aa).

Belongs to the bacterial ribosomal protein bL25 family. CTC subfamily. In terms of assembly, part of the 50S ribosomal subunit; part of the 5S rRNA/L5/L18/L25 subcomplex. Contacts the 5S rRNA. Binds to the 5S rRNA independently of L5 and L18.

This is one of the proteins that binds to the 5S RNA in the ribosome where it forms part of the central protuberance. The chain is Large ribosomal subunit protein bL25 from Paramagnetospirillum magneticum (strain ATCC 700264 / AMB-1) (Magnetospirillum magneticum).